The sequence spans 248 residues: UPF0246 protein RF_0769 (248 aa).

Belongs to the UPF0246 family.

The chain is UPF0246 protein RF_0769 from Rickettsia felis (strain ATCC VR-1525 / URRWXCal2) (Rickettsia azadi).